The primary structure comprises 348 residues: Inactive rhomboid-related protein 2 (348 aa).

One can recognise an EF-hand domain in the interval 14 to 49 (IEASSWIRIFRAFDTDHDGLIQCEEMQKTIRDSTYS). Residues Asp-27, Asp-29, Asp-31, and Glu-38 each contribute to the Ca(2+) site. The next 7 membrane-spanning stretches (helical) occupy residues 121-141 (PPIF…YYVV), 177-197 (LINV…AIGV), 207-227 (IYIL…ALDP), 229-249 (VFLC…ITTI), 263-283 (LPIL…QRFF), 290-310 (VSMY…FILF), and 323-343 (FWVS…LIAA).

Belongs to the peptidase S54 family.

It localises to the membrane. Functionally, probable inactive serine protease. The protein is Inactive rhomboid-related protein 2 of Caenorhabditis elegans.